The sequence spans 363 residues: 3-isopropylmalate dehydrogenase (363 aa).

79 to 92 (GPKWEHLPPNDQPE) lines the NAD(+) pocket. 4 residues coordinate substrate: arginine 100, arginine 110, arginine 139, and aspartate 228. Residues aspartate 228, aspartate 252, and aspartate 256 each coordinate Mg(2+). 286 to 298 (GSAPDIAGKNIAN) lines the NAD(+) pocket.

The protein belongs to the isocitrate and isopropylmalate dehydrogenases family. LeuB type 1 subfamily. As to quaternary structure, homodimer. Mg(2+) is required as a cofactor. It depends on Mn(2+) as a cofactor.

It is found in the cytoplasm. The enzyme catalyses (2R,3S)-3-isopropylmalate + NAD(+) = 4-methyl-2-oxopentanoate + CO2 + NADH. Its pathway is amino-acid biosynthesis; L-leucine biosynthesis; L-leucine from 3-methyl-2-oxobutanoate: step 3/4. In terms of biological role, catalyzes the oxidation of 3-carboxy-2-hydroxy-4-methylpentanoate (3-isopropylmalate) to 3-carboxy-4-methyl-2-oxopentanoate. The product decarboxylates to 4-methyl-2 oxopentanoate. The polypeptide is 3-isopropylmalate dehydrogenase (Vibrio vulnificus (strain CMCP6)).